The chain runs to 1503 residues: EF-hand calcium-binding domain-containing protein 5 (1503 aa).

A disordered region spans residues 1–23; that stretch reads MNESASQEELRPAQENRKEDKER. Residues 8–23 show a composition bias toward basic and acidic residues; sequence EELRPAQENRKEDKER. Serine 77 bears the Phosphoserine mark. Disordered stretches follow at residues 477-518, 544-656, and 730-750; these read ASKT…EQGP, IEPG…QGPY, and FPETTKKEVQKDKPCEPKSQK. Positions 549–561 are enriched in polar residues; that stretch reads HTESTLEQGSSRR. Basic and acidic residues-rich tracts occupy residues 562-582 and 607-622; these read LLTEQETHRESTTEQGQHKGS and GSRRESIAEQDRHKGS. The region spanning 869–904 is the EF-hand domain; the sequence is RQRLLLEAIFQKWDSDGSGFLDLKEVDELLYTYKEG. Ca(2+) is bound by residues aspartate 882, aspartate 884, serine 886, and glutamate 893.

This Homo sapiens (Human) protein is EF-hand calcium-binding domain-containing protein 5 (EFCAB5).